Reading from the N-terminus, the 589-residue chain is Sulfite reductase [NADPH] hemoprotein beta-component (589 aa).

4 residues coordinate [4Fe-4S] cluster: Cys-443, Cys-449, Cys-488, and Cys-492. Cys-492 serves as a coordination point for siroheme.

Belongs to the nitrite and sulfite reductase 4Fe-4S domain family. In terms of assembly, alpha(8)-beta(8). The alpha component is a flavoprotein, the beta component is a hemoprotein. The cofactor is siroheme. [4Fe-4S] cluster is required as a cofactor.

It catalyses the reaction hydrogen sulfide + 3 NADP(+) + 3 H2O = sulfite + 3 NADPH + 4 H(+). The protein operates within sulfur metabolism; hydrogen sulfide biosynthesis; hydrogen sulfide from sulfite (NADPH route): step 1/1. In terms of biological role, component of the sulfite reductase complex that catalyzes the 6-electron reduction of sulfite to sulfide. This is one of several activities required for the biosynthesis of L-cysteine from sulfate. In Neisseria meningitidis serogroup C (strain 053442), this protein is Sulfite reductase [NADPH] hemoprotein beta-component.